The primary structure comprises 642 residues: Sodium- and chloride-dependent neutral and basic amino acid transporter B(0+) (642 aa).

Residues 1–44 (MDKLKCPSFFKCREKEKVSASSENFHVGENDENQDRGNWSKKSD) lie on the Cytoplasmic side of the membrane. 3 helical membrane-spanning segments follow: residues 45-65 (YLLS…FPYL), 72-92 (GAFL…LFFL), and 110-130 (ILPL…FVTI). At 131–234 (YYNVIIAYSL…RSSGMNETGV (104 aa)) the chain is on the extracellular side. Residues asparagine 155, asparagine 163, asparagine 174, asparagine 189, asparagine 197, asparagine 202, and asparagine 230 are each glycosylated (N-linked (GlcNAc...) asparagine). The next 2 helical transmembrane spans lie at 235–255 (IVWY…AALF) and 261–281 (SGKV…ILLV). N-linked (GlcNAc...) asparagine glycosylation occurs at asparagine 302. Transmembrane regions (helical) follow at residues 315–335 (AATQ…ALSS), 348–368 (IVVC…IFSI), 399–419 (LAQL…LLTL), 450–477 (ITLG…VHLI), 480–500 (FCAG…IIWI), 528–548 (CWFV…LVQF), and 563–583 (VALG…MAII). Topologically, residues 584 to 642 (KIIQAKGNIFQRLISCCRPASNWGPYLEQHRGERYKDMVDPKKEADHEIPTVSGSRKPE) are cytoplasmic. Residues 622–632 (VDPKKEADHEI) show a composition bias toward basic and acidic residues. Residues 622–642 (VDPKKEADHEIPTVSGSRKPE) form a disordered region.

The protein belongs to the sodium:neurotransmitter symporter (SNF) (TC 2.A.22) family. SLC6A14 subfamily. As to expression, levels are highest in adult and fetal lung, in trachea and salivary gland. Lower levels detected in mammary gland, stomach and pituitary gland, and very low levels in colon, uterus, prostate and testis.

The protein localises to the membrane. The protein resides in the apical cell membrane. It carries out the reaction glycine(out) + chloride(out) + 2 Na(+)(out) = glycine(in) + chloride(in) + 2 Na(+)(in). The catalysed reaction is L-leucine(out) + chloride(out) + 2 Na(+)(out) = L-leucine(in) + chloride(in) + 2 Na(+)(in). The enzyme catalyses L-glutamine(out) + chloride(out) + 2 Na(+)(out) = L-glutamine(in) + chloride(in) + 2 Na(+)(in). It catalyses the reaction L-arginine(out) + chloride(out) + 2 Na(+)(out) = L-arginine(in) + chloride(in) + 2 Na(+)(in). It carries out the reaction (R)-carnitine(out) + chloride(out) + 2 Na(+)(out) = (R)-carnitine(in) + chloride(in) + 2 Na(+)(in). The catalysed reaction is O-butanoyl-(R)-carnitine(out) + chloride(out) + 2 Na(+)(out) = O-butanoyl-(R)-carnitine(in) + chloride(in) + 2 Na(+)(in). The enzyme catalyses O-propanoyl-(R)-carnitine(out) + chloride(out) + 2 Na(+)(out) = O-propanoyl-(R)-carnitine(in) + chloride(in) + 2 Na(+)(in). It catalyses the reaction L-isoleucine(out) + chloride(out) + 2 Na(+)(out) = L-isoleucine(in) + chloride(in) + 2 Na(+)(in). It carries out the reaction L-methionine(out) + chloride(out) + 2 Na(+)(out) = L-methionine(in) + chloride(in) + 2 Na(+)(in). The catalysed reaction is L-valine(out) + chloride(out) + 2 Na(+)(out) = L-valine(in) + chloride(in) + 2 Na(+)(in). The enzyme catalyses L-alanine(out) + chloride(out) + 2 Na(+)(out) = L-alanine(in) + chloride(in) + 2 Na(+)(in). It catalyses the reaction L-serine(out) + chloride(out) + 2 Na(+)(out) = L-serine(in) + chloride(in) + 2 Na(+)(in). It carries out the reaction L-cysteine(out) + chloride(out) + 2 Na(+)(out) = L-cysteine(in) + chloride(in) + 2 Na(+)(in). The catalysed reaction is L-asparagine(out) + chloride(out) + 2 Na(+)(out) = L-asparagine(in) + chloride(in) + 2 Na(+)(in). The enzyme catalyses L-threonine(out) + chloride(out) + 2 Na(+)(out) = L-threonine(in) + chloride(in) + 2 Na(+)(in). It catalyses the reaction L-phenylalanine(out) + chloride(out) + 2 Na(+)(out) = L-phenylalanine(in) + chloride(in) + 2 Na(+)(in). It carries out the reaction L-tryptophan(out) + chloride(out) + 2 Na(+)(out) = L-tryptophan(in) + chloride(in) + 2 Na(+)(in). The catalysed reaction is L-tyrosine(out) + chloride(out) + 2 Na(+)(out) = L-tyrosine(in) + chloride(in) + 2 Na(+)(in). The enzyme catalyses L-histidine(out) + chloride(out) + 2 Na(+)(out) = L-histidine(in) + chloride(in) + 2 Na(+)(in). It catalyses the reaction L-lysine(out) + chloride(out) + 2 Na(+)(out) = L-lysine(in) + chloride(in) + 2 Na(+)(in). It carries out the reaction beta-alanine(out) + chloride(out) + 2 Na(+)(out) = beta-alanine(in) + chloride(in) + 2 Na(+)(in). In terms of biological role, amino acid transporter that plays an important role in the absorption of amino acids in the intestinal tract. Mediates the uptake of a broad range of neutral and cationic amino acids (with the exception of proline) in a Na(+)/Cl(-)-dependent manner. Transports non-alpha-amino acids such as beta-alanine with low affinity, and has a higher affinity for dipolar and cationic amino acids such as leucine and lysine. Can also transport carnitine, butirylcarnitine and propionylcarnitine coupled to the transmembrane gradients of Na(+) and Cl(-). This chain is Sodium- and chloride-dependent neutral and basic amino acid transporter B(0+), found in Homo sapiens (Human).